The following is a 249-amino-acid chain: Triosephosphate isomerase (249 aa).

Residue 9-11 participates in substrate binding; that stretch reads NWK. The active-site Electrophile is the His-95. The active-site Proton acceptor is the Glu-165. Substrate contacts are provided by residues Gly-171, Ser-211, and 232–233; that span reads GG.

The protein belongs to the triosephosphate isomerase family. As to quaternary structure, homodimer.

It localises to the cytoplasm. The catalysed reaction is D-glyceraldehyde 3-phosphate = dihydroxyacetone phosphate. It functions in the pathway carbohydrate biosynthesis; gluconeogenesis. Its pathway is carbohydrate degradation; glycolysis; D-glyceraldehyde 3-phosphate from glycerone phosphate: step 1/1. Involved in the gluconeogenesis. Catalyzes stereospecifically the conversion of dihydroxyacetone phosphate (DHAP) to D-glyceraldehyde-3-phosphate (G3P). The polypeptide is Triosephosphate isomerase (Chlorobium phaeobacteroides (strain DSM 266 / SMG 266 / 2430)).